A 365-amino-acid polypeptide reads, in one-letter code: GTPase Obg (365 aa).

One can recognise an Obg domain in the interval 2 to 160 (ESFVDEVAIE…KFLRLSLKLL (159 aa)). Residues 161–329 (ADVGIVGLPN…LLEAMDEAFF (169 aa)) enclose the OBG-type G domain. GTP contacts are provided by residues 167–174 (GLPNAGKS), 192–196 (FTTLS), 215–218 (DIPG), 282–285 (NKID), and 310–312 (SAD). Residues serine 174 and threonine 194 each contribute to the Mg(2+) site.

Belongs to the TRAFAC class OBG-HflX-like GTPase superfamily. OBG GTPase family. In terms of assembly, monomer. Requires Mg(2+) as cofactor.

The protein resides in the cytoplasm. An essential GTPase which binds GTP, GDP and possibly (p)ppGpp with moderate affinity, with high nucleotide exchange rates and a fairly low GTP hydrolysis rate. Plays a role in control of the cell cycle, stress response, ribosome biogenesis and in those bacteria that undergo differentiation, in morphogenesis control. The protein is GTPase Obg of Leptospira borgpetersenii serovar Hardjo-bovis (strain JB197).